Here is a 201-residue protein sequence, read N- to C-terminus: 3-isopropylmalate dehydratase small subunit (201 aa).

The protein belongs to the LeuD family. LeuD type 1 subfamily. In terms of assembly, heterodimer of LeuC and LeuD.

It carries out the reaction (2R,3S)-3-isopropylmalate = (2S)-2-isopropylmalate. Its pathway is amino-acid biosynthesis; L-leucine biosynthesis; L-leucine from 3-methyl-2-oxobutanoate: step 2/4. In terms of biological role, catalyzes the isomerization between 2-isopropylmalate and 3-isopropylmalate, via the formation of 2-isopropylmaleate. The chain is 3-isopropylmalate dehydratase small subunit from Erwinia tasmaniensis (strain DSM 17950 / CFBP 7177 / CIP 109463 / NCPPB 4357 / Et1/99).